The sequence spans 394 residues: 1-deoxy-D-xylulose 5-phosphate reductoisomerase (394 aa).

The NADPH site is built by threonine 10, glycine 11, serine 12, isoleucine 13, glycine 38, arginine 39, asparagine 40, and asparagine 123. Lysine 124 contacts 1-deoxy-D-xylulose 5-phosphate. Glutamate 125 lines the NADPH pocket. Residue aspartate 149 coordinates Mn(2+). Serine 150, glutamate 151, serine 175, and histidine 198 together coordinate 1-deoxy-D-xylulose 5-phosphate. Mn(2+) is bound at residue glutamate 151. An NADPH-binding site is contributed by glycine 204. 1-deoxy-D-xylulose 5-phosphate contacts are provided by serine 211, asparagine 216, lysine 217, and glutamate 220. Glutamate 220 is a Mn(2+) binding site.

This sequence belongs to the DXR family. Requires Mg(2+) as cofactor. Mn(2+) is required as a cofactor.

It catalyses the reaction 2-C-methyl-D-erythritol 4-phosphate + NADP(+) = 1-deoxy-D-xylulose 5-phosphate + NADPH + H(+). It functions in the pathway isoprenoid biosynthesis; isopentenyl diphosphate biosynthesis via DXP pathway; isopentenyl diphosphate from 1-deoxy-D-xylulose 5-phosphate: step 1/6. Catalyzes the NADPH-dependent rearrangement and reduction of 1-deoxy-D-xylulose-5-phosphate (DXP) to 2-C-methyl-D-erythritol 4-phosphate (MEP). The sequence is that of 1-deoxy-D-xylulose 5-phosphate reductoisomerase from Cereibacter sphaeroides (strain ATCC 17023 / DSM 158 / JCM 6121 / CCUG 31486 / LMG 2827 / NBRC 12203 / NCIMB 8253 / ATH 2.4.1.) (Rhodobacter sphaeroides).